Consider the following 348-residue polypeptide: [FeFe] hydrogenase maturase subunit HydE (348 aa).

The 220-residue stretch at 49 to 268 (DEVHIRAIIE…LLPDSNIPAT (220 aa)) folds into the Radical SAM core domain. The [4Fe-4S] cluster site is built by cysteine 63, cysteine 67, and cysteine 70. Residues cysteine 311, cysteine 319, and cysteine 322 each contribute to the [2Fe-2S] cluster site.

The protein belongs to the radical SAM superfamily. HydE family. In terms of assembly, monomer. Requires [4Fe-4S] cluster as cofactor. The cofactor is [2Fe-2S] cluster.

Its function is as follows. Required for the maturation of the [FeFe]-hydrogenase HydA. Catalyzes the reductive cleavage of S-adenosyl-L-methionine (in vitro), suggesting it may contribute to the biosynthesis of an essential sulfur-containing ligand that binds to the hydrogenase active site [2Fe-2S] cluster. This is [FeFe] hydrogenase maturase subunit HydE from Thermotoga maritima (strain ATCC 43589 / DSM 3109 / JCM 10099 / NBRC 100826 / MSB8).